The chain runs to 700 residues: pH-response regulator protein palI/prr-5 (700 aa).

Over M1–L8 the chain is Cytoplasmic. Residues A9 to I29 traverse the membrane as a helical segment. Residues K30–S90 lie on the Extracellular side of the membrane. Residues I91 to V111 form a helical membrane-spanning segment. At A112–Y123 the chain is on the cytoplasmic side. The chain crosses the membrane as a helical span at residues L124 to V144. The Extracellular portion of the chain corresponds to D145–H152. Residues L153–V173 form a helical membrane-spanning segment. Residues T174–R700 are Cytoplasmic-facing. 3 disordered regions span residues S226–D491, V507–E560, and D573–R700. Positions K234–I252 are enriched in basic and acidic residues. Over residues G320 to R378 the composition is skewed to gly residues. The span at S414–G424 shows a compositional bias: polar residues. Polar residues-rich tracts occupy residues S593–Y603 and E615–N637. Low complexity predominate over residues V657 to A671.

Belongs to the palI/RIM9 family.

The protein localises to the cell membrane. In terms of biological role, required for the proteolytic cleavage of the transcription factor pacc-1 in response to alkaline ambient pH. In Neurospora crassa (strain ATCC 24698 / 74-OR23-1A / CBS 708.71 / DSM 1257 / FGSC 987), this protein is pH-response regulator protein palI/prr-5 (prr-5).